The chain runs to 127 residues: uncharacterized protein (127 aa).

This is an uncharacterized protein from Acanthamoeba polyphaga (Amoeba).